Reading from the N-terminus, the 106-residue chain is Cytochrome c2 (106 aa).

Residues C19, C22, H23, and M84 each coordinate heme c.

It belongs to the cytochrome c family. Post-translationally, binds 1 heme c group covalently per subunit.

The protein is Cytochrome c2 of Rhodopila globiformis (Rhodopseudomonas globiformis).